The primary structure comprises 108 residues: Class I hydrophobin 3 (108 aa).

An N-terminal signal peptide occupies residues 1 to 17 (MFSRVFAVASLAALALA). 4 disulfides stabilise this stretch: cysteine 26/cysteine 87, cysteine 33/cysteine 81, cysteine 34/cysteine 67, and cysteine 88/cysteine 101.

The protein belongs to the fungal hydrophobin family. Self-assembles to form functional amyloid fibrils called rodlets. Self-assembly into fibrillar rodlets occurs spontaneously at hydrophobic:hydrophilic interfaces and the rodlets further associate laterally to form amphipathic monolayers.

Its subcellular location is the secreted. The protein resides in the cell wall. Functionally, aerial growth, conidiation, and dispersal of filamentous fungi in the environment rely upon a capability of their secreting small amphipathic proteins called hydrophobins (HPBs) with low sequence identity. Class I can self-assemble into an outermost layer of rodlet bundles on aerial cell surfaces, conferring cellular hydrophobicity that supports fungal growth, development and dispersal; whereas Class II form highly ordered films at water-air interfaces through intermolecular interactions but contribute nothing to the rodlet structure. In Pisolithus tinctorius (Dead man's foot), this protein is Class I hydrophobin 3.